We begin with the raw amino-acid sequence, 224 residues long: Endoplasmic reticulum vesicle protein 25 (224 aa).

An N-terminal signal peptide occupies residues 1-25 (MIPPRSLGSTAALLLVLLFTTLASA). Topologically, residues 26–190 (IKFDLPSNAH…ADTNLSTNMR (165 aa)) are lumenal. The 94-residue stretch at 38-131 (TKCIWNYALS…IPVVTIDLDV (94 aa)) folds into the GOLD domain. Residues 191 to 211 (VTNFAILTLIALIALGVWQVF) form a helical membrane-spanning segment. Over 212-224 (HLRGFFKRKYLID) the chain is Cytoplasmic.

The protein belongs to the EMP24/GP25L family.

It localises to the endoplasmic reticulum membrane. The protein resides in the golgi apparatus membrane. Its function is as follows. Constituent of COPII-coated endoplasmic reticulum-derived transport vesicles. Required for efficient transport of a subset of secretory proteins to the Golgi. Facilitates retrograde transport from the Golgi to the endoplasmic reticulum. The protein is Endoplasmic reticulum vesicle protein 25 (ERV25) of Mycosarcoma maydis (Corn smut fungus).